We begin with the raw amino-acid sequence, 236 residues long: 2-C-methyl-D-erythritol 4-phosphate cytidylyltransferase (236 aa).

The protein belongs to the IspD/TarI cytidylyltransferase family. IspD subfamily.

It catalyses the reaction 2-C-methyl-D-erythritol 4-phosphate + CTP + H(+) = 4-CDP-2-C-methyl-D-erythritol + diphosphate. It functions in the pathway isoprenoid biosynthesis; isopentenyl diphosphate biosynthesis via DXP pathway; isopentenyl diphosphate from 1-deoxy-D-xylulose 5-phosphate: step 2/6. In terms of biological role, catalyzes the formation of 4-diphosphocytidyl-2-C-methyl-D-erythritol from CTP and 2-C-methyl-D-erythritol 4-phosphate (MEP). This is 2-C-methyl-D-erythritol 4-phosphate cytidylyltransferase from Burkholderia orbicola (strain AU 1054).